Here is a 457-residue protein sequence, read N- to C-terminus: Putative zinc finger CCCH domain-containing protein 21 (457 aa).

Disordered stretches follow at residues 51-73, 102-130, 195-221, and 280-329; these read PTSS…ARAS, LESP…EKLL, TSPS…ERER, and RKQA…RLRV. Residues 57-66 show a composition bias toward gly residues; sequence DGGGGGGGGY. Residues 215-276 adopt a coiled-coil conformation; sequence ASAEREREVR…HLSLLLEELE (62 aa). 2 C3H1-type zinc fingers span residues 382-409 and 419-447; these read AAKT…HGLQ and RYKT…HSPL.

This Oryza sativa subsp. japonica (Rice) protein is Putative zinc finger CCCH domain-containing protein 21.